The chain runs to 747 residues: Kinesin-like protein KIF3B (747 aa).

At Met-1 the chain carries N-acetylmethionine. Residue Ser-2 is modified to N-acetylserine; in Kinesin-like protein KIF3B, N-terminally processed. The Kinesin motor domain maps to Ser-9–Ile-340. Gly-96–Thr-103 is an ATP binding site. Residues Val-346 to Glu-579 adopt a coiled-coil conformation. 2 disordered regions span residues Ile-374–Asp-412 and Ile-698–Lys-747. Over residues Gly-393 to Asp-411 the composition is skewed to acidic residues. The globular stretch occupies residues Leu-580–Lys-747. The segment covering Asp-701–Ser-710 has biased composition (polar residues). Residues Arg-711–Arg-721 show a composition bias toward basic residues. The segment covering Lys-722–Ser-735 has biased composition (low complexity).

This sequence belongs to the TRAFAC class myosin-kinesin ATPase superfamily. Kinesin family. Kinesin II subfamily. As to quaternary structure, heterodimer of KIF3A and KIF3B. KIF3A/KIF3B heterodimer interacts with KIFAP3 forming a heterotrimeric (KIF3A/KIF3B/KIFAP3) complex. Interacts with the SMC3 subunit of the cohesin complex. Interacts directly with IFT20. Interacts with FLCN.

Its subcellular location is the cytoplasm. It is found in the cytoskeleton. The protein resides in the cell projection. It localises to the cilium. The protein localises to the dendritic spine. Microtubule-based molecular motor that transport intracellular cargos, such as vesicles, organelles and protein complexes. Uses ATP hydrolysis to generate force to bind and move along the microtubule. Plays a role in cilia formation. Involved in photoreceptor integrity and opsin trafficking in rod photoreceptors. Transports vesicles containing N-methyl-D-aspartate (NMDA) receptor subunit GRIN2A into neuronal dendrites. This Mus musculus (Mouse) protein is Kinesin-like protein KIF3B.